A 1445-amino-acid polypeptide reads, in one-letter code: ABC-type transporter FGSG_00046 (1445 aa).

A run of 11 helical transmembrane segments spans residues Leu21 to Val41, Leu77 to Leu97, Pro119 to Val138, Ile150 to Leu170, Glu187 to Gly207, Thr255 to Leu277, Tyr297 to Ala317, Leu368 to Leu388, Val392 to Leu412, Val481 to Met501, and Ser520 to Phe540. Residues Gly259 to Ser541 enclose the ABC transmembrane type-1 1 domain. An ABC transporter 1 domain is found at Ile595–Arg821. Gly627–Ser634 contacts ATP. The disordered stretch occupies residues Arg803–Ala850. Basic and acidic residues predominate over residues Asn824 to His835. 6 helical membrane passes run Gly868–Phe888, Ile912–Phe932, Ile1004–Met1024, Ser1026–Ile1046, Leu1116–Ile1136, and Ile1147–Trp1167. Positions His974–Ala1173 constitute an ABC transmembrane type-1 2 domain. In terms of domain architecture, ABC transporter 2 spans Ile1210–Ser1441. Gly1244 to Thr1251 is a binding site for ATP.

Belongs to the ABC transporter superfamily. ABCC family.

The protein resides in the cell membrane. In terms of biological role, ABC-type transporter; part of the gene cluster that mediates the biosynthesis of gramillins A and B, bicyclic lipopeptides that induce cell death in maize leaves but not in wheat leaves. May be involved in the secretion of gramillins. This chain is ABC-type transporter FGSG_00046, found in Gibberella zeae (strain ATCC MYA-4620 / CBS 123657 / FGSC 9075 / NRRL 31084 / PH-1) (Wheat head blight fungus).